Reading from the N-terminus, the 838-residue chain is Protein P (838 aa).

The terminal protein domain (TP) stretch occupies residues 1–179; sequence MPLSYQHFRK…FCGSPYSWEQ (179 aa). Positions 180–341 are spacer; sequence ELQHSQRHGD…YCLSHLVNLL (162 aa). The segment at 218–242 is disordered; that stretch reads LGLQPHQGPLATSQPGRSGSIRPRA. The polymerase/reverse transcriptase domain (RT) stretch occupies residues 342-685; it reads EDWGPCVEHG…YLNLYPVARQ (344 aa). Positions 352 to 595 constitute a Reverse transcriptase domain; the sequence is EHHIRIPRTP…YSLNFMGYVI (244 aa). The Mg(2+) site is built by Asp-424, Asp-546, and Asp-547.

The protein belongs to the hepadnaviridae P protein family.

The catalysed reaction is DNA(n) + a 2'-deoxyribonucleoside 5'-triphosphate = DNA(n+1) + diphosphate. It carries out the reaction Endonucleolytic cleavage to 5'-phosphomonoester.. Its activity is regulated as follows. Activated by host HSP70 and HSP40 in vitro to be able to bind the epsilon loop of the pgRNA. Because deletion of the RNase H region renders the protein partly chaperone-independent, the chaperones may be needed indirectly to relieve occlusion of the RNA-binding site by this domain. Inhibited by several reverse-transcriptase inhibitors: Lamivudine, Adefovir and Entecavir. Functionally, multifunctional enzyme that converts the viral RNA genome into dsDNA in viral cytoplasmic capsids. This enzyme displays a DNA polymerase activity that can copy either DNA or RNA templates, and a ribonuclease H (RNase H) activity that cleaves the RNA strand of RNA-DNA heteroduplexes in a partially processive 3'- to 5'-endonucleasic mode. Neo-synthesized pregenomic RNA (pgRNA) are encapsidated together with the P protein, and reverse-transcribed inside the nucleocapsid. Initiation of reverse-transcription occurs first by binding the epsilon loop on the pgRNA genome, and is initiated by protein priming, thereby the 5'-end of (-)DNA is covalently linked to P protein. Partial (+)DNA is synthesized from the (-)DNA template and generates the relaxed circular DNA (RC-DNA) genome. After budding and infection, the RC-DNA migrates in the nucleus, and is converted into a plasmid-like covalently closed circular DNA (cccDNA). The activity of P protein does not seem to be necessary for cccDNA generation, and is presumably released from (+)DNA by host nuclear DNA repair machinery. This chain is Protein P, found in Homo sapiens (Human).